The following is a 1102-amino-acid chain: Phosphatidylinositol 4,5-bisphosphate 3-kinase catalytic subunit gamma isoform (1102 aa).

The region spanning 34-141 (SMELIPIEFV…PGQIHVVQRH (108 aa)) is the PI3K-ABD domain. The 93-residue stretch at 217–309 (NNCVFIVIHR…GEEIHLVLDT (93 aa)) folds into the PI3K-RBD domain. The C2 PI3K-type domain occupies 357–521 (CDRKFRVKIR…NSMSISILLD (165 aa)). The PIK helical domain maps to 541-723 (DRVRAEMPNQ…AVILEAYLRG (183 aa)). One can recognise a PI3K/PI4K catalytic domain in the interval 797-1080 (VIEKCKVMAS…QIEVCRDKGW (284 aa)). The interval 803–809 (VMASKKK) is G-loop. ATP-binding positions include 829-838 (GIIFKHGDDL) and 864-872 (LLPYGCIST). A catalytic loop region spans residues 943–951 (GIGDRHNDN). 961 to 969 (FHIDFGHIL) contacts ATP. The interval 962 to 988 (HIDFGHILGNYKSFLGINKERVPFVLT) is activation loop. A Phosphothreonine; by PKA modification is found at Thr1024. Ser1101 is modified (phosphoserine; by autocatalysis).

This sequence belongs to the PI3/PI4-kinase family. As to quaternary structure, heterodimer of a catalytic subunit PIK3CG and a PIK3R5 or PIK3R6 regulatory subunit. Interacts with GRK2 through the PIK helical domain. Interaction with GRK2 is required for targeting to agonist-occupied receptor. Interacts with PDE3B; regulates PDE3B activity and thereby cAMP levels in cells. Interacts with TPM2. Interacts with EPHA8; regulates integrin-mediated cell adhesion to substrate. Interacts with HRAS; the interaction is required for membrane recruitment and beta-gamma G protein dimer-dependent activation of the PI3K gamma complex PIK3CG:PIK3R6. Post-translationally, autophosphorylation at Ser-1101 has no effect on the phosphatidylinositol-4,5-bisphosphate 3-kinase activity.

The protein localises to the cytoplasm. It is found in the cell membrane. It carries out the reaction a 1,2-diacyl-sn-glycero-3-phospho-(1D-myo-inositol-4,5-bisphosphate) + ATP = a 1,2-diacyl-sn-glycero-3-phospho-(1D-myo-inositol-3,4,5-trisphosphate) + ADP + H(+). The catalysed reaction is a 1,2-diacyl-sn-glycero-3-phospho-(1D-myo-inositol) + ATP = a 1,2-diacyl-sn-glycero-3-phospho-(1D-myo-inositol-3-phosphate) + ADP + H(+). It catalyses the reaction a 1,2-diacyl-sn-glycero-3-phospho-(1D-myo-inositol 4-phosphate) + ATP = a 1,2-diacyl-sn-glycero-3-phospho-(1D-myo-inositol-3,4-bisphosphate) + ADP + H(+). The enzyme catalyses L-seryl-[protein] + ATP = O-phospho-L-seryl-[protein] + ADP + H(+). It participates in phospholipid metabolism; phosphatidylinositol phosphate biosynthesis. With respect to regulation, activated by both the alpha and the beta-gamma G proteins following stimulation of G protein-coupled receptors (GPCRs). Activation by GPCRs is assisted by the regulatory subunits (PIK3R5 or PIK3R6) leading to the translocation from the cytosol to the plasma membrane and to kinase activation. When bound to PIK3R5 the PI3K activity of PIK3CG could be activated greater than 100-fold by the beta-gamma G proteins. Its function is as follows. Phosphoinositide-3-kinase (PI3K) that phosphorylates PtdIns(4,5)P2 (Phosphatidylinositol 4,5-bisphosphate) to generate phosphatidylinositol 3,4,5-trisphosphate (PIP3). PIP3 plays a key role by recruiting PH domain-containing proteins to the membrane, including AKT1 and PDPK1, activating signaling cascades involved in cell growth, survival, proliferation, motility and morphology. Links G-protein coupled receptor activation to PIP3 production. Involved in immune, inflammatory and allergic responses. Modulates leukocyte chemotaxis to inflammatory sites and in response to chemoattractant agents. May control leukocyte polarization and migration by regulating the spatial accumulation of PIP3 and by regulating the organization of F-actin formation and integrin-based adhesion at the leading edge. Controls motility of dendritic cells. Participates in T-lymphocyte migration. Regulates T-lymphocyte proliferation and cytokine production. Required for B-lymphocyte development and signaling. Together with other PI3Ks are involved in the oxidative burst produced by neutrophils in response to chemotactic agents. Together with PIK3CD regulate neutrophil extravasation. Together with PIK3CB promotes platelet aggregation and thrombosis. Regulates alpha-IIb/beta-3 integrins (ITGA2B/ ITGB3) adhesive function in platelets downstream of P2Y12 through a lipid kinase activity-independent mechanism. May have also a lipid kinase activity-dependent function in platelet aggregation. Involved in endothelial progenitor cell migration. Negative regulator of cardiac contractility. Modulates cardiac contractility by anchoring protein kinase A (PKA) and PDE3B activation, reducing cAMP levels. Regulates cardiac contractility also by promoting beta-adrenergic receptor internalization by binding to GRK2 and by non-muscle tropomyosin phosphorylation. Also has serine/threonine protein kinase activity: both lipid and protein kinase activities are required for beta-adrenergic receptor endocytosis. May also have a scaffolding role in modulating cardiac contractility. Contribute to cardiac hypertrophy under pathological stress. Through simultaneous binding of PDE3B to RAPGEF3 and PIK3R6 is assembled in a signaling complex in which the PI3K gamma complex is activated by RAPGEF3 and which is involved in angiogenesis. In neutrophils, participates in a phospholipase C-activating N-formyl peptide-activated GPCR (G protein-coupled receptor) signaling pathway downstream of RASGRP4-mediated Ras-activation, to promote neutrophil functional responses. The protein is Phosphatidylinositol 4,5-bisphosphate 3-kinase catalytic subunit gamma isoform (PIK3CG) of Sus scrofa (Pig).